We begin with the raw amino-acid sequence, 287 residues long: 4-hydroxybenzoate octaprenyltransferase (287 aa).

Helical transmembrane passes span 30 to 50 (ALWI…FTVG), 89 to 109 (WEAV…ILPL), 133 to 153 (FFAI…PMAF), 158 to 178 (GHVP…SVAY), 199 to 221 (ALTF…LGIY), and 267 to 287 (NNWL…AGSF).

This sequence belongs to the UbiA prenyltransferase family. Mg(2+) is required as a cofactor.

The protein localises to the cell inner membrane. The enzyme catalyses all-trans-octaprenyl diphosphate + 4-hydroxybenzoate = 4-hydroxy-3-(all-trans-octaprenyl)benzoate + diphosphate. Its pathway is cofactor biosynthesis; ubiquinone biosynthesis. In terms of biological role, catalyzes the prenylation of para-hydroxybenzoate (PHB) with an all-trans polyprenyl group. Mediates the second step in the final reaction sequence of ubiquinone-8 (UQ-8) biosynthesis, which is the condensation of the polyisoprenoid side chain with PHB, generating the first membrane-bound Q intermediate 3-octaprenyl-4-hydroxybenzoate. The polypeptide is 4-hydroxybenzoate octaprenyltransferase (Paraburkholderia phytofirmans (strain DSM 17436 / LMG 22146 / PsJN) (Burkholderia phytofirmans)).